The chain runs to 161 residues: Protein-export protein SecB (161 aa).

This sequence belongs to the SecB family. Homotetramer, a dimer of dimers. One homotetramer interacts with 1 SecA dimer.

It is found in the cytoplasm. Functionally, one of the proteins required for the normal export of preproteins out of the cell cytoplasm. It is a molecular chaperone that binds to a subset of precursor proteins, maintaining them in a translocation-competent state. It also specifically binds to its receptor SecA. The sequence is that of Protein-export protein SecB from Afipia carboxidovorans (strain ATCC 49405 / DSM 1227 / KCTC 32145 / OM5) (Oligotropha carboxidovorans).